The chain runs to 600 residues: Potassium-transporting ATPase potassium-binding subunit (600 aa).

11 helical membrane passes run 6–26 (IILLAVFLLVLLVLAYPLGTY), 65–85 (GYAIALLVFNVLGTFFVYAVQ), 136–156 (ALSGQNFFSAATGIAVIYALI), 179–199 (LYVLLPLSVIVAVVLMSQGVI), 283–303 (FSNLVEMLAIFLIPAALCFTF), 314–334 (WAILGAMTLLFVVLTAVVMGA), 367–387 (FGISASTLFAAVTTAASCGAV), 419–439 (GLYGMLVFAILAVFIAGLMIG), 458–478 (SLVILVTPCLVLLGTAIAVVL), 523–543 (VMLAIAMWFGRFAVIVPVLAI), and 566–586 (LFIALLVGTVLLVGVLNYVPA).

This sequence belongs to the KdpA family. In terms of assembly, the system is composed of three essential subunits: KdpA, KdpB and KdpC.

The protein localises to the cell inner membrane. Its function is as follows. Part of the high-affinity ATP-driven potassium transport (or Kdp) system, which catalyzes the hydrolysis of ATP coupled with the electrogenic transport of potassium into the cytoplasm. This subunit binds the periplasmic potassium ions and delivers the ions to the membrane domain of KdpB through an intramembrane tunnel. The sequence is that of Potassium-transporting ATPase potassium-binding subunit from Janthinobacterium sp. (strain Marseille) (Minibacterium massiliensis).